The primary structure comprises 442 residues: Cell division protein FtsZ (442 aa).

Residues 18–22 (GGGVN), 105–107 (GTG), Glu136, Arg140, and Asp184 each bind GTP. A compositionally biased stretch (low complexity) spans 329-341 (AAPAAEPVQQQVP). The segment at 329–442 (AAPAAEPVQQ…DDLDVPSFLQ (114 aa)) is disordered. Basic and acidic residues-rich tracts occupy residues 349–362 (PEKE…REEN) and 390–431 (NDRD…RDDR).

Belongs to the FtsZ family. In terms of assembly, homodimer. Polymerizes to form a dynamic ring structure in a strictly GTP-dependent manner. Interacts directly with several other division proteins.

It localises to the cytoplasm. In terms of biological role, essential cell division protein that forms a contractile ring structure (Z ring) at the future cell division site. The regulation of the ring assembly controls the timing and the location of cell division. One of the functions of the FtsZ ring is to recruit other cell division proteins to the septum to produce a new cell wall between the dividing cells. Binds GTP and shows GTPase activity. This chain is Cell division protein FtsZ, found in Corynebacterium glutamicum (strain ATCC 13032 / DSM 20300 / JCM 1318 / BCRC 11384 / CCUG 27702 / LMG 3730 / NBRC 12168 / NCIMB 10025 / NRRL B-2784 / 534).